We begin with the raw amino-acid sequence, 495 residues long: Neuronal acetylcholine receptor subunit beta-4 (495 aa).

The first 20 residues, 1 to 20, serve as a signal peptide directing secretion; that stretch reads MRGTPLLLVSLFSLLQDGDC. Over 21 to 235 the chain is Extracellular; it reads RLANAEEKLM…IIKRKPLFYT (215 aa). Residues asparagine 35, asparagine 92, asparagine 137, and asparagine 165 are each glycosylated (N-linked (GlcNAc...) asparagine). A disulfide bridge connects residues cysteine 152 and cysteine 166. Residues 236–256 traverse the membrane as a helical segment; sequence INLIIPCVLITSLAILVFYLP. The Cytoplasmic segment spans residues 257–264; that stretch reads SDCGEKMT. A Na(+)-binding site is contributed by glutamate 261. A helical transmembrane segment spans residues 265–285; it reads LCISVLLALTFFLLLISKIVP. Topologically, residues 286-297 are extracellular; sequence PTSLDIPLIGKY. A helical transmembrane segment spans residues 298–318; the sequence is LLFTMVLVTFSIVTTVCVLNV. Residues 319–463 lie on the Cytoplasmic side of the membrane; that stretch reads HHRSPSTHTM…WKFVAMVVDR (145 aa). Residues 464–484 form a helical membrane-spanning segment; the sequence is LFLWVFVFVCILGTMGLFLPP. Residues 485–495 are Extracellular-facing; the sequence is LFQIHAPSKDS.

Belongs to the ligand-gated ion channel (TC 1.A.9) family. Acetylcholine receptor (TC 1.A.9.1) subfamily. Beta-4/CHRNB4 sub-subfamily. In terms of assembly, neuronal AChR is composed of two different types of subunits: alpha and beta. CHRNB4/Beta-4 subunit can be combined to CHRNA2/alpha-2, CHRNA3/alpha-3 or CHRNA4/alpha-4, CHRNA5/alpha-5 and CHRNB3/beta-3 to give rise to functional receptors. Forms stoichiometries such as (CHRNA3)2:(CHRNB4)3 or (CHRNA3:CHRNB4)2:CHRNB3. Interacts with RIC3; which is required for proper folding and assembly. Interacts with LYPD6. As to expression, in the brain, it is detected in the medial habenula. In the peripheral nervous system, it is found at least in the adrenal gland.

The protein resides in the synaptic cell membrane. The protein localises to the cell membrane. It carries out the reaction Ca(2+)(in) = Ca(2+)(out). It catalyses the reaction K(+)(in) = K(+)(out). The catalysed reaction is Na(+)(in) = Na(+)(out). Activated by a myriad of ligands such as acetylcholine, cytisine, nicotine, choline and epibatidine. nAChR activity is inhibited by the antagonist alpha-conotoxins BuIA and MII, small disulfide-constrained peptides from cone snails. The heteropentamer CHRNA3:CHRNB4 activity is blocked by the alpha-conotoxin ImI and AuIB. Functionally, component of neuronal acetylcholine receptors (nAChRs) that function as pentameric, ligand-gated cation channels with high calcium permeability among other activities. nAChRs are excitatory neurotrasnmitter receptors formed by a collection of nAChR subunits known to mediate synaptic transmission in the nervous system and the neuromuscular junction. Each nAchR subunit confers differential attributes to channel properties, including activation, deactivation and desensitization kinetics, pH sensitivity, cation permeability, and binding to allosteric modulators. CHRNB4 forms heteropentameric neuronal acetylcholine receptors with CHRNA2, CHRNA3 and CHRNA4, as well as CHRNA5 and CHRNB3 as accesory subunits. CHRNA3:CHRNB4 being predominant in neurons of the autonomic ganglia, it is known as ganglionic nicotinic receptor. CHRNA3:CHRNB4 or CHRNA3:CHRNA5:CHRNB4 play also an important role in the habenulo-interpeduncular tract, modulating the mesolimbic dopamine system and affecting reward circuits and addiction. Hypothalamic CHRNA3:CHRNB4 nAChR activation by nicotine leads to activation of POMC neurons and a decrease in food intake. This is Neuronal acetylcholine receptor subunit beta-4 (Chrnb4) from Rattus norvegicus (Rat).